The following is a 688-amino-acid chain: Polyribonucleotide nucleotidyltransferase (688 aa).

2 residues coordinate Mg(2+): Asp484 and Asp490. One can recognise a KH domain in the interval 550-609; it reads PTTEIFNVAPDKIVEIIGQGGRVIKEIVEKFEVKIDLNKPSGEVKIMGNKERVLKTKEFI. The 63-residue stretch at 626–688 folds into the S1 motif domain; sequence DEVLEAQVKR…NKGKIALDLA (63 aa).

Belongs to the polyribonucleotide nucleotidyltransferase family. It depends on Mg(2+) as a cofactor.

The protein localises to the cytoplasm. It carries out the reaction RNA(n+1) + phosphate = RNA(n) + a ribonucleoside 5'-diphosphate. Its function is as follows. Involved in mRNA degradation. Catalyzes the phosphorolysis of single-stranded polyribonucleotides processively in the 3'- to 5'-direction. The sequence is that of Polyribonucleotide nucleotidyltransferase from Helicobacter pylori (strain G27).